The primary structure comprises 190 residues: Small ribosomal subunit protein uS5 (190 aa).

Positions 22–85 (FVDKLVHINR…DSAKRNLTRV (64 aa)) constitute an S5 DRBM domain.

This sequence belongs to the universal ribosomal protein uS5 family. Part of the 30S ribosomal subunit. Contacts proteins S4 and S8.

Functionally, with S4 and S12 plays an important role in translational accuracy. Its function is as follows. Located at the back of the 30S subunit body where it stabilizes the conformation of the head with respect to the body. The chain is Small ribosomal subunit protein uS5 from Bradyrhizobium sp. (strain BTAi1 / ATCC BAA-1182).